A 149-amino-acid chain; its full sequence is Chromophore lyase CpcS/CpeS homolog (149 aa).

The protein belongs to the CpcS/CpeS biliprotein lyase family.

It localises to the plastid. Its subcellular location is the chloroplast. Its function is as follows. Might function to covalently attach a chromophore to Cys residue(s) of phycobiliproteins. The polypeptide is Chromophore lyase CpcS/CpeS homolog (Porphyra purpurea (Red seaweed)).